We begin with the raw amino-acid sequence, 493 residues long: Galactose-1-phosphate uridylyltransferase (493 aa).

This sequence belongs to the galactose-1-phosphate uridylyltransferase type 2 family.

The protein localises to the cytoplasm. It carries out the reaction alpha-D-galactose 1-phosphate + UDP-alpha-D-glucose = alpha-D-glucose 1-phosphate + UDP-alpha-D-galactose. It participates in carbohydrate metabolism; galactose metabolism. In Streptococcus pneumoniae (strain Hungary19A-6), this protein is Galactose-1-phosphate uridylyltransferase.